A 348-amino-acid chain; its full sequence is NADH-ubiquinone oxidoreductase chain 2 (348 aa).

10 consecutive transmembrane segments (helical) span residues 1–21, 25–45, 60–80, 93–115, 149–169, 177–197, 200–220, 239–259, 274–294, and 326–346; these read MSPYVTMILISSLGLGTTITF, SWLMAWMGLEINTLAITPLMV, FLTQATASGLLLFATLNNAWM, LSAPMITMALALKMGVAPMHFWL, LNTTTMTILGLTSTIIGGLGG, KVLAYSSIAHLGWMVIIIQYS, LALLNLLLYITMTSTAFLTLM, IATMTAMLALLALGGLPPLTG, NLPALATLMALSALLSLFFYL, and LAMLSIMTLMALPTTPTMVAI.

This sequence belongs to the complex I subunit 2 family.

The protein resides in the mitochondrion inner membrane. It carries out the reaction a ubiquinone + NADH + 5 H(+)(in) = a ubiquinol + NAD(+) + 4 H(+)(out). In terms of biological role, core subunit of the mitochondrial membrane respiratory chain NADH dehydrogenase (Complex I) that is believed to belong to the minimal assembly required for catalysis. Complex I functions in the transfer of electrons from NADH to the respiratory chain. The immediate electron acceptor for the enzyme is believed to be ubiquinone. The sequence is that of NADH-ubiquinone oxidoreductase chain 2 (MT-ND2) from Latimeria chalumnae (Coelacanth).